A 224-amino-acid chain; its full sequence is UPF0758 protein SPO0054 (224 aa).

The MPN domain maps to 102–224 (VISSWDALLD…ELSFRAEGYL (123 aa)). Zn(2+)-binding residues include His-173, His-175, and Asp-186. Residues 173-186 (HNHPSGDPTPSQSD) carry the JAMM motif motif.

This sequence belongs to the UPF0758 family.

This Ruegeria pomeroyi (strain ATCC 700808 / DSM 15171 / DSS-3) (Silicibacter pomeroyi) protein is UPF0758 protein SPO0054.